We begin with the raw amino-acid sequence, 820 residues long: Phospholipase D alpha 3 (820 aa).

The C2 domain occupies Met1–Leu133. Asp194 provides a ligand contact to Ca(2+). A PLD phosphodiesterase 1 domain is found at Thr334–Arg371. Active-site residues include His339, Lys341, and Asp346. His339 serves as a coordination point for a 1,2-diacyl-sn-glycero-3-phosphate. Positions 377 and 411 each coordinate Ca(2+). A 1,2-diacyl-sn-glycero-3-phosphate contacts are provided by Gln528 and His667. Residues Phe662 to Ser689 enclose the PLD phosphodiesterase 2 domain. Residues His667, Lys669, and Asp674 contribute to the active site. Glu730 is a Ca(2+) binding site.

Belongs to the phospholipase D family. C2-PLD subfamily. It depends on Ca(2+) as a cofactor. As to expression, expressed in buds, flowers, siliques, stems, old leaves and roots. Expressed in the sieve elements.

Its subcellular location is the cytoplasm. The protein localises to the membrane. The enzyme catalyses a 1,2-diacyl-sn-glycero-3-phosphocholine + H2O = a 1,2-diacyl-sn-glycero-3-phosphate + choline + H(+). Functionally, hydrolyzes glycerol-phospholipids at the terminal phosphodiesteric bond to generate phosphatidic acids (PA). Active with phosphatidylcholine (PC), phosphatidylethanolamine (PE), phosphatidylglycerol (PG), and phosphatidylserine (PS) as substrates. No activity toward phosphatidylinositol (PI) or PIP2. Positively mediates plant responses to hyperosmotic stresses and promotes root growth, flowering, and stress avoidance. Not involved in the abscisic acid regulation of stomatal movement and transpirational water loss. This is Phospholipase D alpha 3 from Arabidopsis thaliana (Mouse-ear cress).